The chain runs to 122 residues: Large ribosomal subunit protein uL14 (122 aa).

This sequence belongs to the universal ribosomal protein uL14 family. As to quaternary structure, part of the 50S ribosomal subunit. Forms a cluster with proteins L3 and L19. In the 70S ribosome, L14 and L19 interact and together make contacts with the 16S rRNA in bridges B5 and B8.

Binds to 23S rRNA. Forms part of two intersubunit bridges in the 70S ribosome. The polypeptide is Large ribosomal subunit protein uL14 (Rhodococcus jostii (strain RHA1)).